The chain runs to 115 residues: T-cell receptor gamma chain V region V108B (115 aa).

The first 18 residues, methionine 1–glycine 18, serve as a signal peptide directing secretion. A v segment region spans residues glutamine 19–isoleucine 115.

The protein is T-cell receptor gamma chain V region V108B (Tcrg-V1) of Mus musculus (Mouse).